A 313-amino-acid polypeptide reads, in one-letter code: tRNA dimethylallyltransferase (313 aa).

14–21 is a binding site for ATP; sequence GPTASGKT. 16–21 contacts substrate; it reads TASGKT. 2 interaction with substrate tRNA regions span residues 39–42 and 163–167; these read DSAL and QRIGR.

The protein belongs to the IPP transferase family. Monomer. Requires Mg(2+) as cofactor.

The catalysed reaction is adenosine(37) in tRNA + dimethylallyl diphosphate = N(6)-dimethylallyladenosine(37) in tRNA + diphosphate. In terms of biological role, catalyzes the transfer of a dimethylallyl group onto the adenine at position 37 in tRNAs that read codons beginning with uridine, leading to the formation of N6-(dimethylallyl)adenosine (i(6)A). In Thiobacillus denitrificans (strain ATCC 25259 / T1), this protein is tRNA dimethylallyltransferase.